The following is a 468-amino-acid chain: ATP synthase subunit beta (468 aa).

Position 155–162 (155–162) interacts with ATP; sequence GGAGVGKT.

This sequence belongs to the ATPase alpha/beta chains family. F-type ATPases have 2 components, CF(1) - the catalytic core - and CF(0) - the membrane proton channel. CF(1) has five subunits: alpha(3), beta(3), gamma(1), delta(1), epsilon(1). CF(0) has three main subunits: a(1), b(2) and c(9-12). The alpha and beta chains form an alternating ring which encloses part of the gamma chain. CF(1) is attached to CF(0) by a central stalk formed by the gamma and epsilon chains, while a peripheral stalk is formed by the delta and b chains.

It is found in the cell membrane. The enzyme catalyses ATP + H2O + 4 H(+)(in) = ADP + phosphate + 5 H(+)(out). Produces ATP from ADP in the presence of a proton gradient across the membrane. The catalytic sites are hosted primarily by the beta subunits. In Streptococcus suis (strain 98HAH33), this protein is ATP synthase subunit beta.